Reading from the N-terminus, the 43-residue chain is Defensin (43 aa).

Disulfide bonds link Cys3–Cys34, Cys20–Cys39, and Cys24–Cys41.

The protein resides in the secreted. Functionally, antibacterial peptide active against Gram-positive and Gram-negative bacteria. This is Defensin from Palomena prasina (Green shield bug).